Reading from the N-terminus, the 452-residue chain is GTPase Der (452 aa).

2 EngA-type G domains span residues 9–170 (KIIA…PEED) and 185–362 (LQIV…KTWN). Residues 15-22 (GRPNVGKS), 62-66 (DTPGF), 124-127 (NKCE), 191-198 (GRPNAGKS), 238-242 (DTAGL), and 303-306 (NKWD) contribute to the GTP site. The region spanning 363 to 448 (KKITTSKLNE…PIRFNYIKTK (86 aa)) is the KH-like domain.

The protein belongs to the TRAFAC class TrmE-Era-EngA-EngB-Septin-like GTPase superfamily. EngA (Der) GTPase family. As to quaternary structure, associates with the 50S ribosomal subunit.

Its function is as follows. GTPase that plays an essential role in the late steps of ribosome biogenesis. The sequence is that of GTPase Der from Rickettsia bellii (strain OSU 85-389).